The sequence spans 339 residues: uncharacterized protein (339 aa).

An ABC transporter domain is found at 13-243 (LSLNKLDVGF…PATPFICEFI (231 aa)). Position 45–52 (45–52 (GPSGSGKS)) interacts with ATP.

It belongs to the ABC transporter superfamily.

It localises to the cell inner membrane. Its function is as follows. Probably part of a binding-protein-dependent transport system y4fNOP. Probably responsible for energy coupling to the transport system. This is an uncharacterized protein from Sinorhizobium fredii (strain NBRC 101917 / NGR234).